The following is a 141-amino-acid chain: Large ribosomal subunit protein uL11c (141 aa).

It belongs to the universal ribosomal protein uL11 family. In terms of assembly, part of the ribosomal stalk of the 50S ribosomal subunit. Interacts with L10 and the large rRNA to form the base of the stalk. L10 forms an elongated spine to which L12 dimers bind in a sequential fashion forming a multimeric L10(L12)X complex.

It is found in the plastid. It localises to the chloroplast. Forms part of the ribosomal stalk which helps the ribosome interact with GTP-bound translation factors. This Cyanidium caldarium (Red alga) protein is Large ribosomal subunit protein uL11c.